The primary structure comprises 222 residues: MPKTMHFLFRFIVFFYLWGLFTAQRQKKEERTEEVKIEVLHRPENCSKTSKKGDLLNAHYDGYLAKDGSKFYCSRTQNEGHPKWFVLGVGQVIKGLDIAMTDMCPGEKRKVVIPPSFAYGKEGYAEGKIPPDATLIFEIELYAVTKGPRSTETFKQIDMDSDRQLSKAEINLYLQREFEKDEKPRDKSYQDAVLEDIFKKNDHDGDGFISPKEYNVYQHDEL.

Positions 1-23 (MPKTMHFLFRFIVFFYLWGLFTA) are cleaved as a signal peptide. An N-linked (GlcNAc...) asparagine glycan is attached at asparagine 45. The PPIase FKBP-type domain maps to 53–145 (GDLLNAHYDG…IFEIELYAVT (93 aa)). EF-hand domains follow at residues 145-180 (TKGP…EFEK) and 189-222 (YQDA…HDEL). Residues aspartate 158, aspartate 160, aspartate 162, glutamine 164, glutamate 169, aspartate 202, aspartate 204, aspartate 206, and glutamate 213 each contribute to the Ca(2+) site. A Prevents secretion from ER motif is present at residues 219-222 (HDEL).

Post-translationally, glycosylated.

It is found in the endoplasmic reticulum lumen. It catalyses the reaction [protein]-peptidylproline (omega=180) = [protein]-peptidylproline (omega=0). Its function is as follows. PPIases accelerate the folding of proteins during protein synthesis. The sequence is that of Peptidyl-prolyl cis-trans isomerase FKBP7 (FKBP7) from Pongo abelii (Sumatran orangutan).